We begin with the raw amino-acid sequence, 115 residues long: Virion-associated protein (115 aa).

Coiled-coil stretches lie at residues 1-28 and 33-54; these read MAAT…MLER and KPTG…KIDQ. The span at 96–106 shows a compositional bias: polar residues; that stretch reads GNEELGSSGNP. The segment at 96–115 is disordered; sequence GNEELGSSGNPNAVKWPPRK.

Belongs to the caulimovirus ORF III family. Homotetramer, through coiled-coil domain. Homotrimer when interacts with icosehadral capsid. Interacts with capsid protein, and with Movement protein.

The protein localises to the virion. It is found in the host cell junction. It localises to the host plasmodesma. Functionally, plays a role in virus cell-to-cell and plant-to-plant transmission. Interacts with virion icosahedral capsid and movement protein, thereby facilitating virion cell-to-cell transmission through plasmodesmata opened by viral movement protein. Also interacts with aphid transmission factor, attaching the virion to aphid stylet when the animal feeds on an virus infected plant. Aphid saliva may later detach the virion, inducing release of infectious particles when the animal feeds on a new plant. The sequence is that of Virion-associated protein from Scrophularia californica (California bee plant).